Reading from the N-terminus, the 100-residue chain is Aspartyl/glutamyl-tRNA(Asn/Gln) amidotransferase subunit C (100 aa).

This sequence belongs to the GatC family. Heterotrimer of A, B and C subunits.

The catalysed reaction is L-glutamyl-tRNA(Gln) + L-glutamine + ATP + H2O = L-glutaminyl-tRNA(Gln) + L-glutamate + ADP + phosphate + H(+). It catalyses the reaction L-aspartyl-tRNA(Asn) + L-glutamine + ATP + H2O = L-asparaginyl-tRNA(Asn) + L-glutamate + ADP + phosphate + 2 H(+). Its function is as follows. Allows the formation of correctly charged Asn-tRNA(Asn) or Gln-tRNA(Gln) through the transamidation of misacylated Asp-tRNA(Asn) or Glu-tRNA(Gln) in organisms which lack either or both of asparaginyl-tRNA or glutaminyl-tRNA synthetases. The reaction takes place in the presence of glutamine and ATP through an activated phospho-Asp-tRNA(Asn) or phospho-Glu-tRNA(Gln). In Streptococcus equi subsp. zooepidemicus (strain H70), this protein is Aspartyl/glutamyl-tRNA(Asn/Gln) amidotransferase subunit C.